The sequence spans 300 residues: F-box associated domain-containing protein sdz-33 (300 aa).

The F-box domain maps to 5–51; that stretch reads PFPILCLPDFVLQKSLKLMGVVEHLCLSILSKNIKQLIATLKGYPKC.

Expressed in D-type motor neuron cell bodies.

In terms of biological role, substrate recognition component of E3 ubiquitin-protein ligase complex which mediates the ubiquitination and subsequent proteasomal degradation of target proteins such as mdl-1. Positively regulates axon regeneration by targeting mdl-1 for ubiquitin-mediated degradation; probably thereby reducing levels of mdl-1-mxl-1 heterodimers, allowing free mxl-1 to form complexes with tdpt-1 and thus inhibiting tdpt-1-dependent sumoylation of ets-4. The chain is F-box associated domain-containing protein sdz-33 from Caenorhabditis elegans.